The chain runs to 346 residues: Dihydroorotase (346 aa).

Residues His13 and His15 each coordinate Zn(2+). Substrate contacts are provided by residues 15 to 17 and Asn41; that span reads HLR. Zn(2+) is bound by residues Lys99, His136, and His174. At Lys99 the chain carries N6-carboxylysine. Substrate is bound at residue His136. Residue Leu219 participates in substrate binding. Residue Asp247 coordinates Zn(2+). The active site involves Asp247. Residues His251 and Ala263 each contribute to the substrate site.

Belongs to the metallo-dependent hydrolases superfamily. DHOase family. Class II DHOase subfamily. Homodimer. The cofactor is Zn(2+).

It catalyses the reaction (S)-dihydroorotate + H2O = N-carbamoyl-L-aspartate + H(+). The protein operates within pyrimidine metabolism; UMP biosynthesis via de novo pathway; (S)-dihydroorotate from bicarbonate: step 3/3. Its function is as follows. Catalyzes the reversible cyclization of carbamoyl aspartate to dihydroorotate. The protein is Dihydroorotase of Rhizobium rhizogenes (strain K84 / ATCC BAA-868) (Agrobacterium radiobacter).